The chain runs to 702 residues: MKNKECCKCYNPCEKICVNYSTTDVAFERPNPCKPIPCKPTPIPCDPCHNTKDNLTGDIVIIGAGAAGSLLAHYLARFSNMKIILLEAGHSHFNDPVVTDPMGFFGKYNPPNENISMSQNPSYSWQGAQEPNTGAYGNRPIIAHGMGFGGSTMINRLNLVVGGRTVFDNDWPVGWKYDDVKNYFRRVLVDINPVRDNTKASITSVALDALRIIAEQQIASGEPVDFLLNKATGNVPNVEKTTPDAVPLNLNDYEGVNSVVAFSSFYMGVNQLSDGNYIRKYAGNTYLNRNYVDENGRGIGKFSGLRVVSDAVVDRIIFKGNRAVGVNYIDREGIMHYVKVNKEVVVTSGAFYTPTILQRSGIGDFTYLSSIGVKNLVYNNPLVGTGLKNHYSPVTITRVHGEPSEVSRFLSNMAANPTNMGFKGLAELGFHRLDPNKPANANTVTYRKYQLMMTAGVGIPAEQQYLSGLSPSSNNLFTLIADDIRFAPEGYIKIGTPNIPRDVPKIFFNTFVTYTPTSAPADQQWPIAQKTLAPLISALLGYDIIYQTLMSMNQTARDSGFQVSLEMVYPLNDLIYKLHNGLATYGANWWHYFVPTLVGDDTPAGREFADTLSKLSYYPRVGAHLDSHQGCSCSIGRTVDSNLKVIGTQNVRVADLSAAAFPPGGNTWATASMIGARAVDLILGFPYLRDLPVNDVPILNVN.

The chain crosses the membrane as a helical span at residues Leu55–Leu75. Asp58–Ala88 is a binding site for FAD. His628 is a catalytic residue.

The protein belongs to the GMC oxidoreductase family. FAD serves as cofactor.

The protein localises to the virion. The protein resides in the host membrane. This chain is Putative GMC-type oxidoreductase R135, found in Acanthamoeba polyphaga (Amoeba).